A 510-amino-acid polypeptide reads, in one-letter code: Histidine ammonia-lyase (510 aa).

A cross-link (5-imidazolinone (Ala-Gly)) is located at residues 143–145 (ASG). The residue at position 144 (S144) is a 2,3-didehydroalanine (Ser).

The protein belongs to the PAL/histidase family. In terms of processing, contains an active site 4-methylidene-imidazol-5-one (MIO), which is formed autocatalytically by cyclization and dehydration of residues Ala-Ser-Gly.

The protein localises to the cytoplasm. It carries out the reaction L-histidine = trans-urocanate + NH4(+). Its pathway is amino-acid degradation; L-histidine degradation into L-glutamate; N-formimidoyl-L-glutamate from L-histidine: step 1/3. The protein is Histidine ammonia-lyase of Yersinia pseudotuberculosis serotype I (strain IP32953).